A 165-amino-acid polypeptide reads, in one-letter code: Large ribosomal subunit protein uL15 (165 aa).

Residues 1–29 (MTSKKKRQRGSRTHGGGSHKNRRGAGHRG) are compositionally biased toward basic residues. Disordered stretches follow at residues 1 to 59 (MTSK…QKVQ) and 133 to 165 (KVEGAGGSVELTDLGEERQAEAEETEDADADEE). Residues 30–47 (GRGDAGRDKHEFHNHEPL) are compositionally biased toward basic and acidic residues. Residues 154–165 (AEETEDADADEE) show a composition bias toward acidic residues.

It belongs to the universal ribosomal protein uL15 family. Part of the 50S ribosomal subunit. Interacts weakly with proteins L18e and L32e.

Functionally, binds to the 23S rRNA. This chain is Large ribosomal subunit protein uL15 (rpl15), found in Haloarcula marismortui (strain ATCC 43049 / DSM 3752 / JCM 8966 / VKM B-1809) (Halobacterium marismortui).